A 67-amino-acid chain; its full sequence is SPbeta prophage-derived uncharacterized protein YoqF (67 aa).

This is SPbeta prophage-derived uncharacterized protein YoqF (yoqF) from Bacillus subtilis (strain 168).